A 44-amino-acid polypeptide reads, in one-letter code: Large ribosomal subunit protein bL34 (44 aa).

This sequence belongs to the bacterial ribosomal protein bL34 family.

The chain is Large ribosomal subunit protein bL34 from Wolbachia pipientis wMel.